Here is a 790-residue protein sequence, read N- to C-terminus: uncharacterized protein (790 aa).

In terms of domain architecture, TBDR plug spans 37 to 172 (APVPVPVNGN…NGGVIDAKIK (136 aa)). Residues 178–790 (DSKVKLGYRT…TFWLDVSMKF (613 aa)) enclose the TBDR beta-barrel domain.

It belongs to the TonB-dependent receptor family.

The protein resides in the cell outer membrane. This is an uncharacterized protein from Escherichia coli (strain K12).